The primary structure comprises 89 residues: Small ribosomal subunit protein uS15 (89 aa).

Belongs to the universal ribosomal protein uS15 family. As to quaternary structure, part of the 30S ribosomal subunit. Forms a bridge to the 50S subunit in the 70S ribosome, contacting the 23S rRNA.

Functionally, one of the primary rRNA binding proteins, it binds directly to 16S rRNA where it helps nucleate assembly of the platform of the 30S subunit by binding and bridging several RNA helices of the 16S rRNA. Its function is as follows. Forms an intersubunit bridge (bridge B4) with the 23S rRNA of the 50S subunit in the ribosome. This is Small ribosomal subunit protein uS15 from Lacticaseibacillus casei (strain BL23) (Lactobacillus casei).